Here is a 284-residue protein sequence, read N- to C-terminus: Malonyl-[acyl-carrier protein] O-methyltransferase (284 aa).

Belongs to the methyltransferase superfamily.

The catalysed reaction is malonyl-[ACP] + S-adenosyl-L-methionine = malonyl-[ACP] methyl ester + S-adenosyl-L-homocysteine. It participates in cofactor biosynthesis; biotin biosynthesis. Converts the free carboxyl group of a malonyl-thioester to its methyl ester by transfer of a methyl group from S-adenosyl-L-methionine (SAM). It allows to synthesize pimeloyl-ACP via the fatty acid synthetic pathway. This Legionella pneumophila subsp. pneumophila (strain Philadelphia 1 / ATCC 33152 / DSM 7513) protein is Malonyl-[acyl-carrier protein] O-methyltransferase.